The sequence spans 372 residues: Queuine tRNA-ribosyltransferase (372 aa).

Asp-89 (proton acceptor) is an active-site residue. Substrate is bound by residues 89-93, Asp-161, and Gly-232; that span reads DSGGF. The tract at residues 262 to 268 is RNA binding; that stretch reads GIGDLPS. The active-site Nucleophile is the Asp-281. The RNA binding; important for wobble base 34 recognition stretch occupies residues 286-290; that stretch reads TKAAR. Positions 319, 321, 324, and 351 each coordinate Zn(2+).

This sequence belongs to the queuine tRNA-ribosyltransferase family. Homodimer. Within each dimer, one monomer is responsible for RNA recognition and catalysis, while the other monomer binds to the replacement base PreQ1. Requires Zn(2+) as cofactor.

The enzyme catalyses 7-aminomethyl-7-carbaguanine + guanosine(34) in tRNA = 7-aminomethyl-7-carbaguanosine(34) in tRNA + guanine. Its pathway is tRNA modification; tRNA-queuosine biosynthesis. Its function is as follows. Catalyzes the base-exchange of a guanine (G) residue with the queuine precursor 7-aminomethyl-7-deazaguanine (PreQ1) at position 34 (anticodon wobble position) in tRNAs with GU(N) anticodons (tRNA-Asp, -Asn, -His and -Tyr). Catalysis occurs through a double-displacement mechanism. The nucleophile active site attacks the C1' of nucleotide 34 to detach the guanine base from the RNA, forming a covalent enzyme-RNA intermediate. The proton acceptor active site deprotonates the incoming PreQ1, allowing a nucleophilic attack on the C1' of the ribose to form the product. After dissociation, two additional enzymatic reactions on the tRNA convert PreQ1 to queuine (Q), resulting in the hypermodified nucleoside queuosine (7-(((4,5-cis-dihydroxy-2-cyclopenten-1-yl)amino)methyl)-7-deazaguanosine). The sequence is that of Queuine tRNA-ribosyltransferase from Chlamydia felis (strain Fe/C-56) (Chlamydophila felis).